We begin with the raw amino-acid sequence, 1265 residues long: Guanine nucleotide exchange factor SDC25 (1265 aa).

Residues glutamine 26 to asparagine 97 form the SH3 domain. Disordered stretches follow at residues isoleucine 409 to tryptophan 454 and leucine 623 to glutamate 648. Over residues threonine 416 to serine 428 the composition is skewed to low complexity. One can recognise an N-terminal Ras-GEF domain in the interval serine 782–lysine 914. Positions aspartate 952–lysine 1199 constitute a Ras-GEF domain. The interval arginine 1201–lysine 1252 is disordered. The span at serine 1214–serine 1236 shows a compositional bias: basic and acidic residues. The segment covering glutamine 1239–lysine 1252 has biased composition (basic residues).

Its function is as follows. Promotes the exchange of Ras-bound GDP by GTP. This Saccharomyces cerevisiae (strain AWRI1631) (Baker's yeast) protein is Guanine nucleotide exchange factor SDC25 (SDC25).